The chain runs to 354 residues: tRNA-specific 2-thiouridylase MnmA (354 aa).

ATP is bound by residues 6–13 (LLSGGVDS) and L33. C100 acts as the Nucleophile in catalysis. A disulfide bond links C100 and C195. G123 lines the ATP pocket. Residues 145–147 (KDQ) are interaction with tRNA. C195 serves as the catalytic Cysteine persulfide intermediate.

The protein belongs to the MnmA/TRMU family.

The protein localises to the cytoplasm. The enzyme catalyses S-sulfanyl-L-cysteinyl-[protein] + uridine(34) in tRNA + AH2 + ATP = 2-thiouridine(34) in tRNA + L-cysteinyl-[protein] + A + AMP + diphosphate + H(+). In terms of biological role, catalyzes the 2-thiolation of uridine at the wobble position (U34) of tRNA, leading to the formation of s(2)U34. This Borrelia hermsii (strain HS1 / DAH) protein is tRNA-specific 2-thiouridylase MnmA.